The following is a 255-amino-acid chain: tRNA (guanine-N(1)-)-methyltransferase (255 aa).

S-adenosyl-L-methionine contacts are provided by residues glycine 113 and 133 to 138 (IGDYVL).

The protein belongs to the RNA methyltransferase TrmD family. As to quaternary structure, homodimer.

Its subcellular location is the cytoplasm. It catalyses the reaction guanosine(37) in tRNA + S-adenosyl-L-methionine = N(1)-methylguanosine(37) in tRNA + S-adenosyl-L-homocysteine + H(+). Its function is as follows. Specifically methylates guanosine-37 in various tRNAs. The polypeptide is tRNA (guanine-N(1)-)-methyltransferase (Mannheimia succiniciproducens (strain KCTC 0769BP / MBEL55E)).